The chain runs to 210 residues: Probable nicotinate-nucleotide adenylyltransferase (210 aa).

This sequence belongs to the NadD family.

It carries out the reaction nicotinate beta-D-ribonucleotide + ATP + H(+) = deamido-NAD(+) + diphosphate. Its pathway is cofactor biosynthesis; NAD(+) biosynthesis; deamido-NAD(+) from nicotinate D-ribonucleotide: step 1/1. Functionally, catalyzes the reversible adenylation of nicotinate mononucleotide (NaMN) to nicotinic acid adenine dinucleotide (NaAD). This is Probable nicotinate-nucleotide adenylyltransferase from Streptococcus pyogenes serotype M18 (strain MGAS8232).